The sequence spans 299 residues: dTDP-4-dehydrorhamnose reductase (299 aa).

NADH-binding positions include 10 to 12 (GQV), Asp30, 39 to 40 (DF), and 63 to 65 (AHT). 11–12 (QV) contacts NADPH. NADPH-binding positions include 39 to 40 (DF), 63 to 65 (AHT), and Tyr102. Residue 104–105 (TD) coordinates dTDP-beta-L-rhamnose. Positions 128 and 132 each coordinate NADH. Residues Tyr128 and Lys132 each coordinate NADPH. Tyr128 functions as the Proton donor/acceptor in the catalytic mechanism. Position 153 (Trp153) interacts with dTDP-beta-L-rhamnose.

This sequence belongs to the dTDP-4-dehydrorhamnose reductase family. As to quaternary structure, homodimer. Mg(2+) is required as a cofactor.

It carries out the reaction dTDP-beta-L-rhamnose + NADP(+) = dTDP-4-dehydro-beta-L-rhamnose + NADPH + H(+). It functions in the pathway carbohydrate biosynthesis; dTDP-L-rhamnose biosynthesis. It participates in bacterial outer membrane biogenesis; LPS O-antigen biosynthesis. In terms of biological role, involved in the biosynthesis of the dTDP-L-rhamnose which is an important component of lipopolysaccharide (LPS). Catalyzes the reduction of dTDP-6-deoxy-L-lyxo-4-hexulose to yield dTDP-L-rhamnose. RmlD uses NADH and NADPH nearly equally well. This Shigella flexneri protein is dTDP-4-dehydrorhamnose reductase.